The sequence spans 131 residues: uncharacterized protein (131 aa).

The segment at 101–131 (SWWPPSGVVRGGPSSWPPSGVAEPREALGLP) is disordered.

This is an uncharacterized protein from Homo sapiens (Human).